The following is a 308-amino-acid chain: Bifunctional protein FolD (308 aa).

Residues 171–173 (GRS), Ser198, and Ile239 each bind NADP(+).

It belongs to the tetrahydrofolate dehydrogenase/cyclohydrolase family. In terms of assembly, homodimer.

It catalyses the reaction (6R)-5,10-methylene-5,6,7,8-tetrahydrofolate + NADP(+) = (6R)-5,10-methenyltetrahydrofolate + NADPH. The enzyme catalyses (6R)-5,10-methenyltetrahydrofolate + H2O = (6R)-10-formyltetrahydrofolate + H(+). Its pathway is one-carbon metabolism; tetrahydrofolate interconversion. Functionally, catalyzes the oxidation of 5,10-methylenetetrahydrofolate to 5,10-methenyltetrahydrofolate and then the hydrolysis of 5,10-methenyltetrahydrofolate to 10-formyltetrahydrofolate. This Borreliella burgdorferi (strain ATCC 35210 / DSM 4680 / CIP 102532 / B31) (Borrelia burgdorferi) protein is Bifunctional protein FolD.